Reading from the N-terminus, the 294-residue chain is Nucleotide-binding protein LVIS_0651 (294 aa).

12–19 (GMSGAGKT) provides a ligand contact to ATP. A GTP-binding site is contributed by 62–65 (DLRS).

The protein belongs to the RapZ-like family.

Its function is as follows. Displays ATPase and GTPase activities. This is Nucleotide-binding protein LVIS_0651 from Levilactobacillus brevis (strain ATCC 367 / BCRC 12310 / CIP 105137 / JCM 1170 / LMG 11437 / NCIMB 947 / NCTC 947) (Lactobacillus brevis).